We begin with the raw amino-acid sequence, 156 residues long: Ribonuclease pancreatic (156 aa).

The first 28 residues, 1–28 (MALEKSLALLPLLVLVLLVLGWVQPSLG), serve as a signal peptide directing secretion. The span at 33-43 (AKKFQRQHMDS) shows a compositional bias: basic and acidic residues. The interval 33-52 (AKKFQRQHMDSDGSPSSNPT) is disordered. Substrate contacts are provided by K35 and R38. H40 (proton acceptor) is an active-site residue. 4 disulfides stabilise this stretch: C54–C112, C68–C123, C86–C138, and C93–C100. N-linked (GlcNAc...) asparagine glycosylation occurs at N62. 69–73 (KPVNT) contributes to the substrate binding site. The N-linked (GlcNAc...) asparagine glycan is linked to N90. 2 residues coordinate substrate: K94 and R113. N-linked (GlcNAc...) asparagine glycosylation occurs at N116. H147 acts as the Proton donor in catalysis.

It belongs to the pancreatic ribonuclease family. In terms of assembly, monomer. Interacts with and forms tight 1:1 complexes with RNH1. Dimerization of two such complexes may occur. Interaction with RNH1 inhibits this protein.

Its subcellular location is the secreted. It carries out the reaction an [RNA] containing cytidine + H2O = an [RNA]-3'-cytidine-3'-phosphate + a 5'-hydroxy-ribonucleotide-3'-[RNA].. The enzyme catalyses an [RNA] containing uridine + H2O = an [RNA]-3'-uridine-3'-phosphate + a 5'-hydroxy-ribonucleotide-3'-[RNA].. Its function is as follows. Endonuclease that catalyzes the cleavage of RNA on the 3' side of pyrimidine nucleotides. Acts on single-stranded and double-stranded RNA. The chain is Ribonuclease pancreatic (RNASE1) from Ateles geoffroyi (Black-handed spider monkey).